The following is a 178-amino-acid chain: MAGALRKTMIYLGLADGDEHYESEQSVATHHDEERPQAQEREERRAPAPVREVVREMPTVDAEEEYRAPVTPIKRAASSREDASGLRQITTVHPRSYNDAKVIGESFRDGIPVIMNVTDMGEADAKRLVDFSAGLVFGLHGSIERVTNKVFLLSPSYVEVIGDDKKASETQASFFNQS.

Basic and acidic residues predominate over residues 21-46 (YESEQSVATHHDEERPQAQEREERRA). A disordered region spans residues 21–65 (YESEQSVATHHDEERPQAQEREERRAPAPVREVVREMPTVDAEEE).

Belongs to the SepF family. Homodimer. Interacts with FtsZ.

The protein localises to the cytoplasm. In terms of biological role, cell division protein that is part of the divisome complex and is recruited early to the Z-ring. Probably stimulates Z-ring formation, perhaps through the cross-linking of FtsZ protofilaments. Its function overlaps with FtsA. The protein is Cell division protein SepF of Paenarthrobacter aurescens (strain TC1).